Here is a 470-residue protein sequence, read N- to C-terminus: ATP synthase subunit beta (470 aa).

155 to 162 (GGAGVGKT) contributes to the ATP binding site.

This sequence belongs to the ATPase alpha/beta chains family. F-type ATPases have 2 components, CF(1) - the catalytic core - and CF(0) - the membrane proton channel. CF(1) has five subunits: alpha(3), beta(3), gamma(1), delta(1), epsilon(1). CF(0) has three main subunits: a(1), b(2) and c(9-12). The alpha and beta chains form an alternating ring which encloses part of the gamma chain. CF(1) is attached to CF(0) by a central stalk formed by the gamma and epsilon chains, while a peripheral stalk is formed by the delta and b chains.

The protein localises to the cell membrane. It carries out the reaction ATP + H2O + 4 H(+)(in) = ADP + phosphate + 5 H(+)(out). Its function is as follows. Produces ATP from ADP in the presence of a proton gradient across the membrane. The catalytic sites are hosted primarily by the beta subunits. The chain is ATP synthase subunit beta from Staphylococcus haemolyticus (strain JCSC1435).